A 338-amino-acid polypeptide reads, in one-letter code: Erlin-2 (338 aa).

Residues 1–3 lie on the Cytoplasmic side of the membrane; sequence MAQ. Residues 4–24 traverse the membrane as a helical segment; the sequence is LGAVVAVAASFFCASLFSAVH. Residues 25–338 are Lumenal-facing; it reads KIEEGHIGVY…DEPMEADSEN (314 aa). N-linked (GlcNAc...) asparagine glycosylation occurs at N106. The tract at residues 177–309 is interaction with ERLIN1; sequence EAIRRNYELM…DIPNMFMDSA (133 aa). The residue at position 267 (K267) is an N6-acetyllysine.

This sequence belongs to the band 7/mec-2 family. Forms a heteromeric complex with ERLIN1. In complex with ERLIN1, interacts with RNF170. Interacts with activated ITPR1, independently of the degree of ITPR1 polyubiquitination. Interacts with SCAP, INSIG1, SREBF1 and SREBF2 under cholesterol sufficiency conditions; indicative for an association with the SCAP-SREBP-INSIG complex. Probably part of an AMFR/gp78 and INSIG1-containing ubiquitin ligase complex involved in ERAD of HMGCR. Interacts with TMUB1; TMUB1 bridges the association with AMFR. Interacts with SYVN1 and RNF139. Interacts with TMEM259. Interacts with TMEM41B. In terms of processing, deubiquitinated by USP25; leading to stabilization.

The protein resides in the endoplasmic reticulum membrane. Component of the ERLIN1/ERLIN2 complex which mediates the endoplasmic reticulum-associated degradation (ERAD) of inositol 1,4,5-trisphosphate receptors (IP3Rs) such as ITPR1. Promotes sterol-accelerated ERAD of HMGCR probably implicating an AMFR/gp78-containing ubiquitin ligase complex. Involved in regulation of cellular cholesterol homeostasis by regulation the SREBP signaling pathway. May promote ER retention of the SCAP-SREBF complex. This Bos taurus (Bovine) protein is Erlin-2 (ERLIN2).